The sequence spans 305 residues: Uridylate cyclase (305 aa).

Mn(2+) is bound by residues D58 and D102.

The protein belongs to the adenylyl cyclase class-4/guanylyl cyclase family. Pyrimidine cyclase subfamily. Homodimer. Mn(2+) is required as a cofactor.

The protein localises to the cytoplasm. The enzyme catalyses GTP = 3',5'-cyclic GMP + diphosphate. It catalyses the reaction UTP = 3',5'-cyclic UMP + diphosphate. Its function is as follows. Pycsar (pyrimidine cyclase system for antiphage resistance) provides immunity against bacteriophage. The pyrimidine cyclase (PycC) synthesizes cyclic nucleotides in response to infection; these serve as specific second messenger signals. The signals activate the adjacent effector, leading to bacterial cell death and abortive phage infection. A clade D Pycsar system. Functionally, the pyrimidine cyclase gene of a two-gene Pycsar system, generates cyclic UMP (cUMP) from UTP as well as cGMP from GTP to a lesser extent, has little to no activity on ATP or CTP. Expression of this and adjacent effector MePycTM (AC A0A1C5G2D0) probably confers resistance to bacteriophage. The genes are probably only expressed in response to bacteriophage infection. In Micromonospora echinofusca, this protein is Uridylate cyclase.